Reading from the N-terminus, the 183-residue chain is Nucleosome assembly protein 1-like 5 (183 aa).

Positions 1–71 (MADSENQGPA…APKPKNDFIE (71 aa)) are disordered. Low complexity-rich tracts occupy residues 7–21 (QGPA…AAEA) and 28–49 (AEGG…SAAG). A coiled-coil region spans residues 81–107 (VLALKKLQKRCDKIEAKFDKEFQALEK). A compositionally biased stretch (acidic residues) spans 135-161 (EGEEEEEEEYEDDEEEGEEEEEEEEAA). Residues 135–183 (EGEEEEEEEYEDDEEEGEEEEEEEEAAAEAAAGAKHDDAHAEMPDDAKK) form a disordered region. Over residues 168-183 (AKHDDAHAEMPDDAKK) the composition is skewed to basic and acidic residues.

It belongs to the nucleosome assembly protein (NAP) family.

It localises to the nucleus. This Pongo abelii (Sumatran orangutan) protein is Nucleosome assembly protein 1-like 5 (NAP1L5).